Here is a 516-residue protein sequence, read N- to C-terminus: MAERTSESSSESASFDLEKQQSNHHDRYQSSVSSELEESLKKYPVISNPQDFIVTLDGPDDPDLAVNWPLAKKLRNVAVMGSACLCAGFGSSIFSGAVPEVMVKFHVCRTVALLGISLYVLGFASGPVVWAPMCELFGRRRPMIIAVFIFCIFHIAVATAKDIQTVMICRFFCGFFGSSPITTVAGSFSDMFSARTRGLVIAVYSAIIFNGPLMSPIVGGFIGKSYLGWRWTSYITAIMGFTAFTSMIIFHRETYTRTITEIRASKVRVLTGNYCLHAKSEEEPLEFSYFFHKYFTFPLRLLIFEPILLVVSTYTAFVYGILYGLLEAYPVIFGESRKWRLGVESLPYLAIFVGVCIGCSSVALFQPYYFKKMDENKGRPVPEARLPSMMIGCIVFPIGIFWLAWTGNYPWIHWIVPTLAGSFIGFGIITIFQQTINYIIDCYSGCSASAIAANTLLRSSFGAAFPLFTTQMFNNLGIGWAGSLVGFVAVGLIPVPFMLFLYGPKLRQMSKHCLKD.

The interval 1 to 35 (MAERTSESSSESASFDLEKQQSNHHDRYQSSVSSE) is disordered. A compositionally biased stretch (basic and acidic residues) spans 16–28 (DLEKQQSNHHDRY). Position 31 is a phosphoserine (Ser31). Transmembrane regions (helical) follow at residues 77-97 (VAVM…FSGA), 111-131 (VALL…VVWA), 143-163 (MIIA…AKDI), 166-186 (VMIC…TVAG), 198-218 (GLVI…SPIV), 231-251 (WTSY…IIFH), 301-321 (LLIF…VYGI), 345-365 (SLPY…VALF), 386-406 (LPSM…LAWT), 412-432 (IHWI…ITIF), 439-461 (IIDC…RSSF), and 481-501 (AGSL…MLFL).

It belongs to the major facilitator superfamily.

It localises to the membrane. This is an uncharacterized protein from Schizosaccharomyces pombe (strain 972 / ATCC 24843) (Fission yeast).